The primary structure comprises 240 residues: Probable transcriptional regulatory protein Hac_0344 (240 aa).

The protein belongs to the TACO1 family.

The protein localises to the cytoplasm. In Helicobacter acinonychis (strain Sheeba), this protein is Probable transcriptional regulatory protein Hac_0344.